The primary structure comprises 32 residues: Cytochrome b6-f complex subunit 7 (32 aa).

Residues 5–25 (FIASASISFIITLIGLTLGFA) traverse the membrane as a helical segment.

It belongs to the PetM family. The 4 large subunits of the cytochrome b6-f complex are cytochrome b6, subunit IV (17 kDa polypeptide, PetD), cytochrome f and the Rieske protein, while the 4 small subunits are PetG, PetL, PetM and PetN. The complex functions as a dimer.

The protein resides in the plastid. Its subcellular location is the chloroplast thylakoid membrane. Its function is as follows. Component of the cytochrome b6-f complex, which mediates electron transfer between photosystem II (PSII) and photosystem I (PSI), cyclic electron flow around PSI, and state transitions. The protein is Cytochrome b6-f complex subunit 7 of Guillardia theta (Cryptophyte).